We begin with the raw amino-acid sequence, 464 residues long: MEPEPHSSEAVPTAAALFAWGANSYGQLGLGHKEDVLSAQQLSDFCKSGCIKRITGGGGHSAVVTDEGSLFVCGLNKDGQLGLGHTEEVLYFTPCKSLLGCAIQQVACGWDFTIILTENGQVLSCGSNSFGQLGVPHGPRRCVIPQAIELLREKVVSIAAGLRHALAATASGTVFQWGTGLASSGRRLCPGQTLPLFLTAKEPSTVTGLENSQAVCVLAGSDHSASLTDAGELYVWGSNKHGQLASQAAFLLLPQRIEARCFQNEKIAAVWSGWTHLVAQTVTGKVFTWGRADYGQLGRTVETREGWESEKQDPSLPGSGPQKGTPSCLPCLTGATEISCGSEHNLAVIGGVCHSWGWNEHGMCGDGTEADVWAPKPVPGLRFFLGLHVGCGAGHSLALCQLPALPALGQHPSVTSPSPDATKEARSQEAMEQERNQKERHAETSPQAQSDRFRNGGLVAETLE.

RCC1 repeat units lie at residues 14-66, 68-118, 119-170, 172-229, 230-282, 283-349, and 350-401; these read AAAL…VVTD, GSLF…ILTE, NGQV…AATA, GTVF…SLTD, AGEL…AQTV, TGKV…LAVI, and GGVC…ALCQ. Positions 301-313 are enriched in basic and acidic residues; sequence VETREGWESEKQD. Residues 301–323 form a disordered region; it reads VETREGWESEKQDPSLPGSGPQK. Residues 411 to 464 form a disordered region; sequence HPSVTSPSPDATKEARSQEAMEQERNQKERHAETSPQAQSDRFRNGGLVAETLE. Basic and acidic residues predominate over residues 421 to 443; it reads ATKEARSQEAMEQERNQKERHAE. A Phosphoserine modification is found at Ser-427.

In terms of assembly, interacts with SEC5. The interaction occurs only in the presence of magnesium or manganese and is stimulated by dCTP or GTP.

The protein localises to the cytoplasm. Its subcellular location is the nucleus. Functionally, probable guanine nucleotide exchange factor (GEF), which may be involved in the secretion process. The protein is Secretion-regulating guanine nucleotide exchange factor (SERGEF) of Bos taurus (Bovine).